The sequence spans 224 residues: N-terminal Xaa-Pro-Lys N-methyltransferase 1-A (224 aa).

S-adenosyl-L-methionine is bound by residues G70, R75, 92–94 (DVT), 120–121 (LQ), and Q136.

The protein belongs to the methyltransferase superfamily. NTM1 family.

The protein localises to the nucleus. The enzyme catalyses N-terminal L-alanyl-L-prolyl-L-lysyl-[protein] + 3 S-adenosyl-L-methionine = N-terminal N,N,N-trimethyl-L-alanyl-L-prolyl-L-lysyl-[protein] + 3 S-adenosyl-L-homocysteine + 3 H(+). It catalyses the reaction N-terminal L-seryl-L-prolyl-L-lysyl-[protein] + 3 S-adenosyl-L-methionine = N-terminal N,N,N-trimethyl-L-seryl-L-prolyl-L-lysyl-[protein] + 3 S-adenosyl-L-homocysteine + 3 H(+). The catalysed reaction is N-terminal L-prolyl-L-prolyl-L-lysyl-[protein] + 2 S-adenosyl-L-methionine = N-terminal N,N-dimethyl-L-prolyl-L-prolyl-L-lysyl-[protein] + 2 S-adenosyl-L-homocysteine + 2 H(+). In terms of biological role, distributive alpha-N-methyltransferase that methylates the N-terminus of target proteins containing the N-terminal motif [Ala/Gly/Pro/Ser]-Pro-Lys when the initiator Met is cleaved. Specifically catalyzes mono-, di- or tri-methylation of the exposed alpha-amino group of the Ala, Gly or Ser residue in the [Ala/Gly/Ser]-Pro-Lys motif and mono- or di-methylation of Pro in the Pro-Pro-Lys motif. Required during mitosis for normal bipolar spindle formation and chromosome segregation via its action on target proteins. In Xenopus laevis (African clawed frog), this protein is N-terminal Xaa-Pro-Lys N-methyltransferase 1-A (ntmt1-a).